The sequence spans 831 residues: Prolactin receptor (831 aa).

Residues 1-23 form the signal peptide; that stretch reads MKQNLISSVQIILLLPLTTVGLT. The Extracellular segment spans residues 24–438; it reads SQSFPGKPKI…EIPNDFRVKD (415 aa). Fibronectin type-III domains are found at residues 30-128, 129-232, 233-331, and 332-433; these read KPKI…VQPG, SPVN…SPPE, KPTI…VQPD, and PPAN…IPND. Cys-36 and Cys-46 are disulfide-bonded. Asn-59 carries an N-linked (GlcNAc...) asparagine glycan. An intrachain disulfide couples Cys-75 to Cys-86. N-linked (GlcNAc...) asparagine glycosylation is found at Asn-91, Asn-100, Asn-112, Asn-132, Asn-262, Asn-303, Asn-315, and Asn-335. Residues Asp-414 and His-416 each contribute to the Zn(2+) site. The short motif at 419–423 is the WSXWS motif element; the sequence is WSEWS. A helical transmembrane segment spans residues 439 to 459; sequence MIVWIVLGVLSSLICLIMSWT. Topologically, residues 460–831 are cytoplasmic; that stretch reads MVLKGYRMIT…DPSSFMPSFK (372 aa). The Box 1 motif signature appears at 471 to 479; sequence ILPPVPGPK. 2 disordered regions span residues 527 to 563 and 776 to 831; these read HQLM…SPSL and HTPT…PSFK. Residues 545-554 are compositionally biased toward basic and acidic residues; sequence TLKETDRDSG. Polar residues predominate over residues 777 to 803; the sequence is TPTSQEEPAKETSQNPQQGQVETNMSY.

The protein belongs to the type I cytokine receptor family. Type 1 subfamily.

The protein resides in the membrane. Functionally, this is a receptor for the anterior pituitary hormone prolactin. This chain is Prolactin receptor (PRLR), found in Meleagris gallopavo (Wild turkey).